Here is a 100-residue protein sequence, read N- to C-terminus: Urease subunit gamma (100 aa).

It belongs to the urease gamma subunit family. As to quaternary structure, heterotrimer of UreA (gamma), UreB (beta) and UreC (alpha) subunits. Three heterotrimers associate to form the active enzyme.

Its subcellular location is the cytoplasm. The catalysed reaction is urea + 2 H2O + H(+) = hydrogencarbonate + 2 NH4(+). The protein operates within nitrogen metabolism; urea degradation; CO(2) and NH(3) from urea (urease route): step 1/1. The protein is Urease subunit gamma of Paraburkholderia xenovorans (strain LB400).